We begin with the raw amino-acid sequence, 538 residues long: Cryptic outer membrane porin BglH (538 aa).

The signal sequence occupies residues 1 to 25 (MFRRNLITSAILLMAPLAFSAQSLA). Positions 52 to 82 (KDEEKKKYTPATVNRSVSTNDQGYAANPFPT) are disordered. The segment covering 62–73 (ATVNRSVSTNDQ) has biased composition (polar residues).

The protein belongs to the porin LamB (TC 1.B.3) family. Homomonomer; no physical evidence of a homotrimer has been found, however conductance experiments suggest it may be a homotrimer. The monomer probably consists of 18 antiparallel beta-strands.

The protein localises to the cell outer membrane. Functionally, part of a cryptic operon that is poorly expressed in vivo. May be an ancestral sugar porin with a broad carbohydrate specificity; it binds aromatic beta-D-glucosides such as arbutin and salicin, but with low affinity compared to the binding of maltooligosaccharides to the LamB porin. This chain is Cryptic outer membrane porin BglH (bglH), found in Escherichia coli (strain K12).